A 444-amino-acid chain; its full sequence is Probable glycine dehydrogenase (decarboxylating) subunit 1 (444 aa).

Belongs to the GcvP family. N-terminal subunit subfamily. As to quaternary structure, the glycine cleavage system is composed of four proteins: P, T, L and H. In this organism, the P 'protein' is a heterodimer of two subunits.

The enzyme catalyses N(6)-[(R)-lipoyl]-L-lysyl-[glycine-cleavage complex H protein] + glycine + H(+) = N(6)-[(R)-S(8)-aminomethyldihydrolipoyl]-L-lysyl-[glycine-cleavage complex H protein] + CO2. In terms of biological role, the glycine cleavage system catalyzes the degradation of glycine. The P protein binds the alpha-amino group of glycine through its pyridoxal phosphate cofactor; CO(2) is released and the remaining methylamine moiety is then transferred to the lipoamide cofactor of the H protein. This chain is Probable glycine dehydrogenase (decarboxylating) subunit 1, found in Chlorobaculum tepidum (strain ATCC 49652 / DSM 12025 / NBRC 103806 / TLS) (Chlorobium tepidum).